The sequence spans 554 residues: Suppressor of hairless homolog (554 aa).

The tract at residues 1–31 is disordered; it reads MYHPHHLPAHGQVQSHQHREDAAATSSRDVN. 3 DNA-binding regions span residues 83–90, 218–227, and 291–323; these read KSYGNEKR, RLRSQTVSTR, and RKVDKQTAILDADDPVSQLHKCAFYLKDTERMY. Positions 381 to 471 constitute an IPT/TIG domain; sequence PNVHSLQLNG…YPTNLTFTFT (91 aa). A disordered region spans residues 489–554; the sequence is GSKRPSASMP…NGANMLRTAS (66 aa). Over residues 508–519 the composition is skewed to basic and acidic residues; the sequence is DSGRGNESDRGD.

It belongs to the Su(H) family. As to quaternary structure, interacts with activated Notch proteins.

The protein resides in the nucleus. Transcriptional regulator that plays a central role in Notch signaling, a signaling pathway involved in cell-cell communication that regulates a broad spectrum of cell-fate determinations. Acts as a transcriptional repressor when it is not associated with Notch proteins. When associated with some Notch protein, it acts as a transcriptional activator that activates transcription of Notch target genes. Required for the transcriptional expression of Brachyury, suggesting that it participates in notochord differentiation. This chain is Suppressor of hairless homolog (Su(H)), found in Ciona intestinalis (Transparent sea squirt).